Here is a 164-residue protein sequence, read N- to C-terminus: Protein-export protein SecB (164 aa).

Belongs to the SecB family. As to quaternary structure, homotetramer, a dimer of dimers. One homotetramer interacts with 1 SecA dimer.

It is found in the cytoplasm. Functionally, one of the proteins required for the normal export of preproteins out of the cell cytoplasm. It is a molecular chaperone that binds to a subset of precursor proteins, maintaining them in a translocation-competent state. It also specifically binds to its receptor SecA. The chain is Protein-export protein SecB from Ruegeria sp. (strain TM1040) (Silicibacter sp.).